The sequence spans 339 residues: Tryptophan--tRNA ligase (339 aa).

ATP contacts are provided by residues 11–13 (QPT) and 19–20 (GN). Residues 12–20 (PTGAIHIGN) carry the 'HIGH' region motif. Aspartate 135 provides a ligand contact to L-tryptophan. ATP is bound by residues 147–149 (GED), isoleucine 191, and 200–204 (KMSKS). The short motif at 200–204 (KMSKS) is the 'KMSKS' region element.

The protein belongs to the class-I aminoacyl-tRNA synthetase family. Homodimer.

The protein resides in the cytoplasm. It carries out the reaction tRNA(Trp) + L-tryptophan + ATP = L-tryptophyl-tRNA(Trp) + AMP + diphosphate + H(+). Its function is as follows. Catalyzes the attachment of tryptophan to tRNA(Trp). This Prochlorococcus marinus (strain SARG / CCMP1375 / SS120) protein is Tryptophan--tRNA ligase.